A 563-amino-acid chain; its full sequence is Tripeptidyl-peptidase 1 (563 aa).

The first 19 residues, 1–19 (MGLQARFLGLLALVIAGKC), serve as a signal peptide directing secretion. A propeptide spans 20–195 (THSPEPDQRW…PEPQGVGPVG (176 aa)) (removed in mature form). The cysteines at positions 111 and 122 are disulfide-linked. Residues 199 to 563 (GVTPSVLRQR…PALLKTLLNP (365 aa)) form the Peptidase S53 domain. N-linked (GlcNAc...) asparagine glycosylation is found at Asn210 and Asn222. Residues Glu272 and Asp276 each act as charge relay system in the active site. N-linked (GlcNAc...) asparagine glycans are attached at residues Asn286, Asn313, and Asn443. 2 disulfide bridges follow: Cys365–Cys526 and Cys522–Cys537. Ser475 functions as the Charge relay system in the catalytic mechanism. 2 residues coordinate Ca(2+): Asp517 and Val518. 3 residues coordinate Ca(2+): Gly539, Gly541, and Asp543.

In terms of assembly, monomer. Interacts with CLN5. Interacts with CLN3. Requires Ca(2+) as cofactor. Activated by autocatalytic proteolytical processing upon acidification. N-glycosylation is required for processing and activity.

Its subcellular location is the lysosome. It is found in the melanosome. It catalyses the reaction Release of an N-terminal tripeptide from a polypeptide, but also has endopeptidase activity.. In terms of biological role, lysosomal serine protease with tripeptidyl-peptidase I activity. May act as a non-specific lysosomal peptidase which generates tripeptides from the breakdown products produced by lysosomal proteinases. Requires substrates with an unsubstituted N-terminus. This chain is Tripeptidyl-peptidase 1 (Tpp1), found in Rattus norvegicus (Rat).